The sequence spans 305 residues: uncharacterized protein (305 aa).

In terms of domain architecture, ABC transporter spans 5–233 (LELKNVTKNI…ENDTYFFQVE (229 aa)). 37–44 (GPNGAGKT) provides a ligand contact to ATP.

It belongs to the ABC transporter superfamily.

This is an uncharacterized protein from Bacillus subtilis (strain 168).